Consider the following 421-residue polypeptide: Phosphoribosylamine--glycine ligase (421 aa).

The region spanning 108-314 (KEIMVKYNVP…FAQNIDDIMM (207 aa)) is the ATP-grasp domain. 134–195 (IEEQGAPIVV…EEFLDGEEFS (62 aa)) contributes to the ATP binding site. Mg(2+)-binding residues include E284 and N286.

It belongs to the GARS family. Requires Mg(2+) as cofactor. Mn(2+) serves as cofactor.

The enzyme catalyses 5-phospho-beta-D-ribosylamine + glycine + ATP = N(1)-(5-phospho-beta-D-ribosyl)glycinamide + ADP + phosphate + H(+). It participates in purine metabolism; IMP biosynthesis via de novo pathway; N(1)-(5-phospho-D-ribosyl)glycinamide from 5-phospho-alpha-D-ribose 1-diphosphate: step 2/2. This is Phosphoribosylamine--glycine ligase from Streptococcus pyogenes serotype M18 (strain MGAS8232).